A 417-amino-acid chain; its full sequence is Transmembrane protease serine 11G (417 aa).

Residues 1–21 (MYQPGILVRRKRVWKPWTVAL) lie on the Cytoplasmic side of the membrane. The helical; Signal-anchor for type II membrane protein transmembrane segment at 22–42 (ITVALLLALAVLIGLLVYFLV) threads the bilayer. Residues 43-417 (YDEKTHYYQA…RDWIKSKTSI (375 aa)) lie on the Extracellular side of the membrane. Residues 46-165 (KTHYYQASFW…PYLREMNAAQ (120 aa)) form the SEA domain. An N-linked (GlcNAc...) asparagine glycan is attached at Asn-60. One can recognise a Peptidase S1 domain in the interval 186 to 416 (IADGKPADKA…YRDWIKSKTS (231 aa)). Residues Cys-211 and Cys-227 are joined by a disulfide bond. Active-site charge relay system residues include His-226 and Asp-271. 2 cysteine pairs are disulfide-bonded: Cys-336–Cys-352 and Cys-363–Cys-392. Residue Ser-367 is the Charge relay system of the active site.

The protein belongs to the peptidase S1 family.

It localises to the membrane. The chain is Transmembrane protease serine 11G (Tmprss11g) from Mus musculus (Mouse).